We begin with the raw amino-acid sequence, 391 residues long: Alkanesulfonate monooxygenase (391 aa).

It belongs to the SsuD family.

It catalyses the reaction an alkanesulfonate + FMNH2 + O2 = an aldehyde + FMN + sulfite + H2O + 2 H(+). In terms of biological role, catalyzes the desulfonation of aliphatic sulfonates. This chain is Alkanesulfonate monooxygenase, found in Paracidovorax citrulli (strain AAC00-1) (Acidovorax citrulli).